The following is a 269-amino-acid chain: Tryptophan synthase alpha chain (269 aa).

Residues Glu49 and Asp60 each act as proton acceptor in the active site.

It belongs to the TrpA family. As to quaternary structure, tetramer of two alpha and two beta chains.

It catalyses the reaction (1S,2R)-1-C-(indol-3-yl)glycerol 3-phosphate + L-serine = D-glyceraldehyde 3-phosphate + L-tryptophan + H2O. The protein operates within amino-acid biosynthesis; L-tryptophan biosynthesis; L-tryptophan from chorismate: step 5/5. In terms of biological role, the alpha subunit is responsible for the aldol cleavage of indoleglycerol phosphate to indole and glyceraldehyde 3-phosphate. The polypeptide is Tryptophan synthase alpha chain (Paramagnetospirillum magneticum (strain ATCC 700264 / AMB-1) (Magnetospirillum magneticum)).